Consider the following 98-residue polypeptide: Molybdopterin synthase sulfur carrier subunit (98 aa).

Residue Gly98 is modified to 1-thioglycine; alternate. Position 98 is a glycyl adenylate; alternate (Gly98).

This sequence belongs to the MoaD family. MOCS2A subfamily. In terms of assembly, heterotetramer; composed of 2 small (MOCS2A) and 2 large (MOCS2B) subunits. Post-translationally, C-terminal thiocarboxylation occurs in 2 steps, it is first acyl-adenylated (-COAMP) via the hesA/moeB/thiF part of MOCS3, then thiocarboxylated (-COSH) via the rhodanese domain of MOCS3.

It is found in the cytoplasm. The protein operates within cofactor biosynthesis; molybdopterin biosynthesis. Acts as a sulfur carrier required for molybdopterin biosynthesis. Component of the molybdopterin synthase complex that catalyzes the conversion of precursor Z into molybdopterin by mediating the incorporation of 2 sulfur atoms into precursor Z to generate a dithiolene group. In the complex, serves as sulfur donor by being thiocarboxylated (-COSH) at its C-terminus by MOCS3. After interaction with MOCS2B, the sulfur is then transferred to precursor Z to form molybdopterin. The chain is Molybdopterin synthase sulfur carrier subunit from Aedes aegypti (Yellowfever mosquito).